The chain runs to 342 residues: Succinylglutamate desuccinylase (342 aa).

Zn(2+) is bound by residues H64, E67, and H159. E222 is an active-site residue.

It belongs to the AspA/AstE family. Succinylglutamate desuccinylase subfamily. Zn(2+) serves as cofactor.

It carries out the reaction N-succinyl-L-glutamate + H2O = L-glutamate + succinate. Its pathway is amino-acid degradation; L-arginine degradation via AST pathway; L-glutamate and succinate from L-arginine: step 5/5. In terms of biological role, transforms N(2)-succinylglutamate into succinate and glutamate. The protein is Succinylglutamate desuccinylase of Burkholderia orbicola (strain MC0-3).